A 360-amino-acid chain; its full sequence is Glutamate--cysteine ligase (360 aa).

It belongs to the glutamate--cysteine ligase type 2 family. YbdK subfamily.

It carries out the reaction L-cysteine + L-glutamate + ATP = gamma-L-glutamyl-L-cysteine + ADP + phosphate + H(+). In terms of biological role, catalyzes the synthesis of gamma-glutamylcysteine (gamma-GC), the main low-molecular-weight thiol compound instead of glutathione in halophilic archaea. The sequence is that of Glutamate--cysteine ligase from Halobacterium salinarum (strain ATCC 29341 / DSM 671 / R1).